The sequence spans 101 residues: MAKKSMIEREIKRAKMVQQYAAKRASLKEITTNADLPMEQRFKAQLKLAELPRNSSATRIHNRCQLTGRPHAYYRKLKLSRIMLRELASFGQIPGMVKSSW.

This sequence belongs to the universal ribosomal protein uS14 family. As to quaternary structure, part of the 30S ribosomal subunit. Contacts proteins S3 and S10.

Binds 16S rRNA, required for the assembly of 30S particles and may also be responsible for determining the conformation of the 16S rRNA at the A site. This Cereibacter sphaeroides (strain ATCC 17029 / ATH 2.4.9) (Rhodobacter sphaeroides) protein is Small ribosomal subunit protein uS14.